The sequence spans 453 residues: Ribosomal protein uS12 methylthiotransferase RimO (453 aa).

Residues 5–120 (PKVGFVSLGC…VMQAVHSHLP (116 aa)) form the MTTase N-terminal domain. Positions 14, 50, 79, 151, 155, and 158 each coordinate [4Fe-4S] cluster. The Radical SAM core domain occupies 137 to 382 (LTPRHYAYLK…MEVAEEVSAN (246 aa)). Residues 385 to 453 (QRKIGKTLKV…ADGHDLWGEV (69 aa)) enclose the TRAM domain.

This sequence belongs to the methylthiotransferase family. RimO subfamily. [4Fe-4S] cluster is required as a cofactor.

It localises to the cytoplasm. It catalyses the reaction L-aspartate(89)-[ribosomal protein uS12]-hydrogen + (sulfur carrier)-SH + AH2 + 2 S-adenosyl-L-methionine = 3-methylsulfanyl-L-aspartate(89)-[ribosomal protein uS12]-hydrogen + (sulfur carrier)-H + 5'-deoxyadenosine + L-methionine + A + S-adenosyl-L-homocysteine + 2 H(+). Its function is as follows. Catalyzes the methylthiolation of an aspartic acid residue of ribosomal protein uS12. The sequence is that of Ribosomal protein uS12 methylthiotransferase RimO from Burkholderia orbicola (strain MC0-3).